Reading from the N-terminus, the 1316-residue chain is DNA-directed RNA polymerase subunit beta' (1316 aa).

Positions 60, 62, 75, and 78 each coordinate Zn(2+). Mg(2+) contacts are provided by D535, D537, and D539. Zn(2+)-binding residues include C891, C968, C975, and C978.

This sequence belongs to the RNA polymerase beta' chain family. The RNAP catalytic core consists of 2 alpha, 1 beta, 1 beta' and 1 omega subunit. When a sigma factor is associated with the core the holoenzyme is formed, which can initiate transcription. Requires Mg(2+) as cofactor. The cofactor is Zn(2+).

The catalysed reaction is RNA(n) + a ribonucleoside 5'-triphosphate = RNA(n+1) + diphosphate. Its function is as follows. DNA-dependent RNA polymerase catalyzes the transcription of DNA into RNA using the four ribonucleoside triphosphates as substrates. The protein is DNA-directed RNA polymerase subunit beta' of Mycobacterium ulcerans (strain Agy99).